The sequence spans 148 residues: Ponticulin-like protein D (148 aa).

An N-terminal signal peptide occupies residues 1–20; sequence MLLNKSLLLLVAFVFAIVSA. N-linked (GlcNAc...) asparagine glycosylation occurs at asparagine 67. Aspartate 125 carries the GPI-like-anchor amidated aspartate lipid modification. Residues 126–148 constitute a propeptide, removed in mature form; it reads SSAAATMIASFSAILIALLFALL.

Belongs to the ponticulin family. Post-translationally, the GPI-like-anchor contains a phosphoceramide group, rather than a phosphatidyl group.

Its subcellular location is the cell membrane. In Dictyostelium discoideum (Social amoeba), this protein is Ponticulin-like protein D (ponD).